The sequence spans 264 residues: Thymidylate synthase (264 aa).

Arg21 provides a ligand contact to dUMP. Residue His51 coordinates (6R)-5,10-methylene-5,6,7,8-tetrahydrofolate. DUMP is bound at residue 126–127; the sequence is RR. The active-site Nucleophile is the Cys146. Residues 166-169, Asn177, and 207-209 each bind dUMP; these read RSAD and HLY. Position 169 (Asp169) interacts with (6R)-5,10-methylene-5,6,7,8-tetrahydrofolate. Ala263 contacts (6R)-5,10-methylene-5,6,7,8-tetrahydrofolate.

This sequence belongs to the thymidylate synthase family. Bacterial-type ThyA subfamily. In terms of assembly, homodimer.

It localises to the cytoplasm. It carries out the reaction dUMP + (6R)-5,10-methylene-5,6,7,8-tetrahydrofolate = 7,8-dihydrofolate + dTMP. Its pathway is pyrimidine metabolism; dTTP biosynthesis. Catalyzes the reductive methylation of 2'-deoxyuridine-5'-monophosphate (dUMP) to 2'-deoxythymidine-5'-monophosphate (dTMP) while utilizing 5,10-methylenetetrahydrofolate (mTHF) as the methyl donor and reductant in the reaction, yielding dihydrofolate (DHF) as a by-product. This enzymatic reaction provides an intracellular de novo source of dTMP, an essential precursor for DNA biosynthesis. The polypeptide is Thymidylate synthase (Nitrosomonas europaea (strain ATCC 19718 / CIP 103999 / KCTC 2705 / NBRC 14298)).